A 218-amino-acid chain; its full sequence is Ribonuclease HII (218 aa).

The 190-residue stretch at 22 to 211 folds into the RNase H type-2 domain; sequence VRIAGVDEAG…VRAALESRFS (190 aa). Positions 28, 29, and 119 each coordinate a divalent metal cation.

Belongs to the RNase HII family. The cofactor is Mn(2+). Mg(2+) serves as cofactor.

The protein resides in the cytoplasm. The catalysed reaction is Endonucleolytic cleavage to 5'-phosphomonoester.. Endonuclease that specifically degrades the RNA of RNA-DNA hybrids. This Maricaulis maris (strain MCS10) (Caulobacter maris) protein is Ribonuclease HII.